The sequence spans 284 residues: Cystinosin homolog (284 aa).

7 helical membrane passes run 3–23 (ALSI…SLSF), 37–57 (IGLS…YSVF), 86–106 (IAFA…CFIY), 116–136 (LGIG…ILGF), 139–159 (VFTW…ITFI), 181–201 (NVLL…LDVA), and 216–236 (LGLS…HYIL). One can recognise a PQ-loop 1 domain in the interval 4–70 (LSIISIIIGW…LYFDKLVKNE (67 aa)). Positions 154 to 208 (LFITFIKYIPQAYLNFKNKSTSGWSVHNVLLDFSGGVLSLLQMFLDVADSGNWNI) constitute a PQ-loop 2 domain. Positions 247-269 (NLNDNNIPNNNNNNNNNINNNTP) are disordered.

It belongs to the cystinosin family.

Its subcellular location is the lysosome membrane. The catalysed reaction is L-cystine(out) + H(+)(out) = L-cystine(in) + H(+)(in). Cystine/H(+) symporter that mediates export of cystine, the oxidized dimer of cysteine, from lysosomes. This chain is Cystinosin homolog (ctns), found in Dictyostelium discoideum (Social amoeba).